A 302-amino-acid polypeptide reads, in one-letter code: 4-diphosphocytidyl-2-C-methyl-D-erythritol kinase (302 aa).

Lys11 is a catalytic residue. 93–103 (PVASGLAGGST) contacts ATP. Asp135 is a catalytic residue.

It belongs to the GHMP kinase family. IspE subfamily.

The enzyme catalyses 4-CDP-2-C-methyl-D-erythritol + ATP = 4-CDP-2-C-methyl-D-erythritol 2-phosphate + ADP + H(+). It functions in the pathway isoprenoid biosynthesis; isopentenyl diphosphate biosynthesis via DXP pathway; isopentenyl diphosphate from 1-deoxy-D-xylulose 5-phosphate: step 3/6. Its function is as follows. Catalyzes the phosphorylation of the position 2 hydroxy group of 4-diphosphocytidyl-2C-methyl-D-erythritol. The chain is 4-diphosphocytidyl-2-C-methyl-D-erythritol kinase from Gloeobacter violaceus (strain ATCC 29082 / PCC 7421).